The sequence spans 372 residues: Glutamate 5-kinase (372 aa).

ATP is bound at residue lysine 14. 3 residues coordinate substrate: serine 54, aspartate 141, and asparagine 153. Residue 173–174 (TD) coordinates ATP. Positions 280–358 (RGHVVIDAGA…GEIEAVLGYM (79 aa)) constitute a PUA domain.

It belongs to the glutamate 5-kinase family.

It localises to the cytoplasm. The catalysed reaction is L-glutamate + ATP = L-glutamyl 5-phosphate + ADP. Its pathway is amino-acid biosynthesis; L-proline biosynthesis; L-glutamate 5-semialdehyde from L-glutamate: step 1/2. Its function is as follows. Catalyzes the transfer of a phosphate group to glutamate to form L-glutamate 5-phosphate. The polypeptide is Glutamate 5-kinase (Burkholderia thailandensis (strain ATCC 700388 / DSM 13276 / CCUG 48851 / CIP 106301 / E264)).